Consider the following 28-residue polypeptide: DDNGKPYVLPSVRTCGFDFTGAVEDISK.

It belongs to the class-I pyridoxal-phosphate-dependent aminotransferase family. Homodimer. The cofactor is pyridoxal 5'-phosphate.

Its subcellular location is the mitochondrion matrix. The catalysed reaction is L-aspartate + 2-oxoglutarate = oxaloacetate + L-glutamate. Functionally, plays a key role in amino acid metabolism. Important for metabolite exchange between mitochondria and cytosol. This chain is Aspartate aminotransferase, mitochondrial, found in Catharanthus roseus (Madagascar periwinkle).